The primary structure comprises 145 residues: Hemoglobin subunit beta-3 (145 aa).

A Globin domain is found at 1 to 145 (MLTAEEKAAV…VANALAHRYH (145 aa)). Phosphothreonine is present on Thr11. Lys58 is modified (N6-acetyllysine). Residue His62 participates in heme b binding. N6-acetyllysine is present on Lys81. Residue His91 participates in heme b binding. An S-nitrosocysteine modification is found at Cys92.

The protein belongs to the globin family. Heterotetramer of two alpha chains and two beta chains. In terms of tissue distribution, red blood cells.

Its function is as follows. Involved in oxygen transport from the lung to the various peripheral tissues. This Odocoileus virginianus virginianus (Virginia white-tailed deer) protein is Hemoglobin subunit beta-3 (HBB).